We begin with the raw amino-acid sequence, 580 residues long: MACTSNLSSLSKSWAVLDVPRGAPKATGLWLKRQFIFKTSRICMCMPTPTATQPIATPLIRDNESLLKYLRQPSVLPHEVDDSRKELLGRTRRQLRSTSEPLKAMNLIDTLQRLGLAYHFEDDMNAILSQLSSSGQSDGDLLTTALRFRLLRHNGHKIVQKFMDKNGKFKDSLKEDTMGLLSLYEASHLAANGEDILLEAMELTEAHLKQSLPSLPTQLARKVSSALELPRHRRMARLEARRYIQEYSEEIGHDPNLLELAKLDYNKVQSLHQMELTEISRWWKQLGLVDKLTFARDRPLECFLWTVGILPEPKYSNCRIELAKTIAILLVIDDIFDTHGTIDELVLFTNAIRRWDLEAMEGLPEYMRICYMALYNTTNEICYKILKENGWSVLPYLKATWIDMIEGFMLEASWYNNGQEPNMEEYVANGVTTAGAYMAMVHLFFLIGQGVTEENVKLLMKPYPKLFSCSGRILRLWDDLGTAKEEQERGDLASSIQLFMRENNITCDEEGRKRILQLIDNLWKDLNWELVSRDAMPLAIIKAAFNMARSSQVVYQHEEESYFSSVDNYVESLFFTPIIN.

The transit peptide at Met1–Met44 directs the protein to the chloroplast. Mg(2+)-binding residues include Asp333, Asp337, Asp478, Thr482, and Glu486. Positions Asp333 to Asp337 match the DDXXD motif motif.

It belongs to the terpene synthase family. Tpsg subfamily. As to quaternary structure, monomer. Mg(2+) serves as cofactor. The cofactor is Mn(2+). In terms of tissue distribution, confined to flowers.

The protein resides in the plastid. The protein localises to the chloroplast. Its pathway is secondary metabolite biosynthesis; terpenoid biosynthesis. Monoterpene synthase (mono-TPS) involved in the biosynthesis of monoterpenes natural products, constituent of coffee beverage aroma. This is Putative monoterpene synthase 8 from Coffea arabica (Arabian coffee).